A 66-amino-acid chain; its full sequence is Beta-toxin Cb1 (66 aa).

The LCN-type CS-alpha/beta domain maps to 1–66 (KEGYIVNHST…VWPLPKKTCN (66 aa)). Intrachain disulfides connect Cys-12/Cys-65, Cys-16/Cys-41, Cys-25/Cys-46, and Cys-29/Cys-48.

The protein belongs to the long (4 C-C) scorpion toxin superfamily. Sodium channel inhibitor family. Beta subfamily. In terms of tissue distribution, expressed by the venom gland.

It localises to the secreted. With respect to regulation, inhibited by human antibodies scFvs 10FG2 and LR. Its function is as follows. Beta toxins bind voltage-independently at site-4 of sodium channels (Nav) and reduces peak current and shifts the voltage of activation toward more negative potentials thereby affecting sodium channel activation and promoting spontaneous and repetitive firing. Has an inhibitory effect on voltage-gated sodium channel hNav1.6/SCN8A, affecting both the activation and inactivation processes. This toxin is active against mammals and lethal to mice. This chain is Beta-toxin Cb1, found in Centruroides baergi (Scorpion).